Consider the following 141-residue polypeptide: VLSEGNKKIIKNLLQKIHSQTEVLGAEALARLFECHPQTKSYFPKFSGFSANDKRVKHHGDLVLKALVDTNDHLDDLPHHLHKLAEKHGKDLLVDPHNFKLFSDCIAVTLAAHLQEKSPETHCAVDKFLEEVTYQLSSLYR.

Positions 1–141 (VLSEGNKKII…VTYQLSSLYR (141 aa)) constitute a Globin domain. An O2-binding site is contributed by His59. His88 provides a ligand contact to heme b.

Belongs to the globin family. As to quaternary structure, heterotetramer of two alpha chains and two beta chains. In terms of tissue distribution, red blood cells.

Its function is as follows. Involved in oxygen transport from the lung to the various peripheral tissues. This Torpedo marmorata (Marbled electric ray) protein is Hemoglobin subunit alpha-2.